The following is a 163-amino-acid chain: Phosphopantetheine adenylyltransferase (163 aa).

Thr-10 serves as a coordination point for substrate. ATP contacts are provided by residues 10 to 11 (TF) and His-18. Residues Lys-42, Leu-74, and Arg-88 each coordinate substrate. ATP contacts are provided by residues 89–91 (GLR), Glu-99, and 124–130 (NSFISST).

It belongs to the bacterial CoaD family. Homohexamer. Mg(2+) is required as a cofactor.

The protein localises to the cytoplasm. It carries out the reaction (R)-4'-phosphopantetheine + ATP + H(+) = 3'-dephospho-CoA + diphosphate. Its pathway is cofactor biosynthesis; coenzyme A biosynthesis; CoA from (R)-pantothenate: step 4/5. Its function is as follows. Reversibly transfers an adenylyl group from ATP to 4'-phosphopantetheine, yielding dephospho-CoA (dPCoA) and pyrophosphate. The protein is Phosphopantetheine adenylyltransferase of Shewanella baltica (strain OS155 / ATCC BAA-1091).